A 274-amino-acid polypeptide reads, in one-letter code: Large ribosomal subunit protein bL28m (274 aa).

The disordered stretch occupies residues Ser-249–Ala-274. The segment covering Leu-262–Ala-274 has biased composition (basic and acidic residues).

Belongs to the bacterial ribosomal protein bL28 family. In terms of assembly, component of the mitochondrial large ribosomal subunit (mt-LSU). Mature N.crassa 74S mitochondrial ribosomes consist of a small (37S) and a large (54S) subunit. The 37S small subunit contains a 16S ribosomal RNA (16S mt-rRNA) and 32 different proteins. The 54S large subunit contains a 23S rRNA (23S mt-rRNA) and 42 different proteins.

The protein resides in the mitochondrion. Component of the mitochondrial ribosome (mitoribosome), a dedicated translation machinery responsible for the synthesis of mitochondrial genome-encoded proteins, including at least some of the essential transmembrane subunits of the mitochondrial respiratory chain. The mitoribosomes are attached to the mitochondrial inner membrane and translation products are cotranslationally integrated into the membrane. This Neurospora crassa (strain ATCC 24698 / 74-OR23-1A / CBS 708.71 / DSM 1257 / FGSC 987) protein is Large ribosomal subunit protein bL28m (mrpl24).